Here is a 263-residue protein sequence, read N- to C-terminus: Glycerol uptake facilitator protein (263 aa).

Over 1–7 the chain is Cytoplasmic; sequence MNIYRKK. A helical transmembrane segment spans residues 8–36; it reads NIIKKCFMEFFGTGLVMFFGIGCLAASKL. Residues 37-41 lie on the Extracellular side of the membrane; the sequence is TNANF. The helical transmembrane segment at 42-62 threads the bilayer; the sequence is TQFEISCIWGFGVSIAIYFSS. Topologically, residues 63-65 are cytoplasmic; the sequence is SIS. The stretch at 66 to 69 is an intramembrane region; that stretch reads GAHL. The short motif at 70–72 is the NPA 1 element; the sequence is NPA. An intramembrane region (helical) is located at residues 70–80; it reads NPAVTIFFWLS. At 81-86 the chain is on the cytoplasmic side; sequence SKLNKR. Residues 87–110 traverse the membrane as a helical segment; sequence KVLPYIISQTLGSFFFTMLTYYLY. Over 111 to 145 the chain is Extracellular; the sequence is NNLLISFERNNNVVRGTQESLNLASIFCVYPNYNN. A helical transmembrane segment spans residues 146-171; sequence SFIYDFIIEIFSTALFILIVLEFNNR. The Cytoplasmic portion of the chain corresponds to 172 to 181; the sequence is NSNYFLYNRS. The chain crosses the membrane as a helical span at residues 182–198; that stretch reads VAPILTGFLVCMINLVI. Over 199–202 the chain is Extracellular; the sequence is NPLN. An intramembrane segment occupies 203–206; the sequence is NISL. Positions 207–209 match the NPA 2 motif; it reads NPA. The segment at residues 207–220 is an intramembrane region (helical); it reads NPARDLGPKILLSL. Residues 221–236 lie on the Extracellular side of the membrane; the sequence is TGWGLFSFTGGNDNIL. The chain crosses the membrane as a helical span at residues 237 to 259; the sequence is YCFIPIMGPILGANLGGWIHKTL. The Cytoplasmic segment spans residues 260-263; the sequence is INNS.

This sequence belongs to the MIP/aquaporin (TC 1.A.8) family.

It localises to the cell membrane. It catalyses the reaction glycerol(in) = glycerol(out). In terms of biological role, mediates glycerol diffusion across the cytoplasmic membrane via a pore-type mechanism. This Buchnera aphidicola subsp. Acyrthosiphon pisum (strain APS) (Acyrthosiphon pisum symbiotic bacterium) protein is Glycerol uptake facilitator protein (glpF).